Here is a 481-residue protein sequence, read N- to C-terminus: 2-succinylbenzoate--CoA ligase (481 aa).

Belongs to the ATP-dependent AMP-binding enzyme family. MenE subfamily.

The catalysed reaction is 2-succinylbenzoate + ATP + CoA = 2-succinylbenzoyl-CoA + AMP + diphosphate. It functions in the pathway quinol/quinone metabolism; 1,4-dihydroxy-2-naphthoate biosynthesis; 1,4-dihydroxy-2-naphthoate from chorismate: step 5/7. It participates in quinol/quinone metabolism; menaquinone biosynthesis. Converts 2-succinylbenzoate (OSB) to 2-succinylbenzoyl-CoA (OSB-CoA). The protein is 2-succinylbenzoate--CoA ligase of Bacillus cereus (strain ATCC 10987 / NRS 248).